A 231-amino-acid polypeptide reads, in one-letter code: MPKHGKKYVEAAKQVDSEKQYEVREALELVRKLAPAKFDETVEAAVKLGVDPRHADQQVRGAVVLPHGTGKTRTVLVFAKGEKVTEAEKAGADYVGGEEMVAKIQGGWMEFDVAIATPDMMSAVGKIGRILGPRGLMPNPKTGTVTFDIARAVAEVKAGKIQYRVDKAGNIHAPIGKVSFEVEKLEENLKTLIDALIRAKPAAAKGQYLRGIVVTSTMGPGVRVNTRKFIG.

It belongs to the universal ribosomal protein uL1 family. As to quaternary structure, part of the 50S ribosomal subunit.

In terms of biological role, binds directly to 23S rRNA. The L1 stalk is quite mobile in the ribosome, and is involved in E site tRNA release. Protein L1 is also a translational repressor protein, it controls the translation of the L11 operon by binding to its mRNA. This Desulforudis audaxviator (strain MP104C) protein is Large ribosomal subunit protein uL1.